The sequence spans 511 residues: NADH-quinone oxidoreductase subunit N 1 (511 aa).

Helical transmembrane passes span 15–35, 46–66, 89–109, 120–140, 142–162, 177–197, 221–241, 264–284, 289–309, 317–337, 347–367, 393–413, 426–446, and 471–491; these read LALP…LDLV, ALAL…WQAV, FAIY…LMSI, GEYH…ASGM, LILL…LVGF, LLLG…FYGL, PIAL…IAAV, VAVK…MLWP, YTPI…FAAL, LLAY…VASD, GILV…AVIT, AVLL…AGFW, GHYT…YYYL, and AALW…EVFL.

The protein belongs to the complex I subunit 2 family. As to quaternary structure, NDH-1 is composed of 14 different subunits. Subunits NuoA, H, J, K, L, M, N constitute the membrane sector of the complex.

It localises to the cell inner membrane. The catalysed reaction is a quinone + NADH + 5 H(+)(in) = a quinol + NAD(+) + 4 H(+)(out). In terms of biological role, NDH-1 shuttles electrons from NADH, via FMN and iron-sulfur (Fe-S) centers, to quinones in the respiratory chain. The immediate electron acceptor for the enzyme in this species is believed to be ubiquinone. Couples the redox reaction to proton translocation (for every two electrons transferred, four hydrogen ions are translocated across the cytoplasmic membrane), and thus conserves the redox energy in a proton gradient. The sequence is that of NADH-quinone oxidoreductase subunit N 1 from Koribacter versatilis (strain Ellin345).